The primary structure comprises 298 residues: MATTSIAWQQTASRVQQFYRLTKPRVVSLIVFTAVIGMFLSVPGVVPLDTLIFATVGIAFVAGAAAAVNCLVEQKIDAVMARTRGRPLPRGTVTSPETFVFLALVGGAGLLILHQLVNPLTMWLTLGTFVGYAIIYTVILKPMTPQNIVIGGASGAMPPVLGWAAVTGEVSADALLLFLIIFAWTPPHFWALALYRKLEYAKVGMPMLPVTHGDKFTRLHVLLYTLILIAVTLMPYATQMSGLIYLAGAIVLDVIFLYYAVKIYLNYSDQLARSAFRYSILYLAGLFAVLLVDHYIRF.

9 helical membrane passes run 26-46 (VVSLIVFTAVIGMFLSVPGVV), 52-72 (IFATVGIAFVAGAAAAVNCLV), 99-119 (FVFLALVGGAGLLILHQLVNP), 120-140 (LTMWLTLGTFVGYAIIYTVIL), 148-168 (IVIGGASGAMPPVLGWAAVTG), 174-194 (ALLLFLIIFAWTPPHFWALAL), 219-239 (LHVLLYTLILIAVTLMPYATQ), 241-261 (SGLIYLAGAIVLDVIFLYYAV), and 276-296 (FRYSILYLAGLFAVLLVDHYI).

Belongs to the UbiA prenyltransferase family. Protoheme IX farnesyltransferase subfamily.

It localises to the cell inner membrane. It carries out the reaction heme b + (2E,6E)-farnesyl diphosphate + H2O = Fe(II)-heme o + diphosphate. Its pathway is porphyrin-containing compound metabolism; heme O biosynthesis; heme O from protoheme: step 1/1. Functionally, converts heme B (protoheme IX) to heme O by substitution of the vinyl group on carbon 2 of heme B porphyrin ring with a hydroxyethyl farnesyl side group. This is Protoheme IX farnesyltransferase from Nitrosospira multiformis (strain ATCC 25196 / NCIMB 11849 / C 71).